Here is a 310-residue protein sequence, read N- to C-terminus: ADP-L-glycero-D-manno-heptose-6-epimerase (310 aa).

NADP(+)-binding positions include 10–11 (FI), 31–32 (DN), Lys38, Lys53, 75–79 (EGACS), and Asn92. Tyr140 serves as the catalytic Proton acceptor. Residue Lys144 coordinates NADP(+). Residue Asn169 participates in substrate binding. NADP(+)-binding residues include Val170 and Lys178. Lys178 acts as the Proton acceptor in catalysis. Residues Ser180, His187, 201–204 (FEGS), Arg209, and Tyr272 each bind substrate.

This sequence belongs to the NAD(P)-dependent epimerase/dehydratase family. HldD subfamily. In terms of assembly, homopentamer. NADP(+) serves as cofactor.

The catalysed reaction is ADP-D-glycero-beta-D-manno-heptose = ADP-L-glycero-beta-D-manno-heptose. The protein operates within nucleotide-sugar biosynthesis; ADP-L-glycero-beta-D-manno-heptose biosynthesis; ADP-L-glycero-beta-D-manno-heptose from D-glycero-beta-D-manno-heptose 7-phosphate: step 4/4. It functions in the pathway bacterial outer membrane biogenesis; LPS core biosynthesis. Functionally, catalyzes the interconversion between ADP-D-glycero-beta-D-manno-heptose and ADP-L-glycero-beta-D-manno-heptose via an epimerization at carbon 6 of the heptose. This Klebsiella pneumoniae protein is ADP-L-glycero-D-manno-heptose-6-epimerase.